The sequence spans 206 residues: Pro-glucagon (206 aa).

Residues 1-22 (MKMKSIYFIAGLLLMIVQGSWQ) form the signal peptide. Residues 27-57 (DTEEKSRSFKASQSEPLDESRQLNEVKRHSQ) form a disordered region. The segment covering 44 to 54 (DESRQLNEVKR) has biased composition (basic and acidic residues). A propeptide spanning residues 86–109 (NGQQGQEDKENDKFPDQLSSNAIS) is cleaved from the precursor. The residue at position 147 (arginine 147) is an Arginine amide. 2 consecutive propeptides follow at residues 151–163 (DFPEKALMAEEMG) and 199–206 (RDLLGEYQ).

This sequence belongs to the glucagon family. In terms of processing, proglucagon is post-translationally processed in a tissue-specific manner in pancreatic A cells and intestinal L cells. In pancreatic A cells, the major bioactive hormone is glucagon cleaved by PCSK2/PC2. In the intestinal L cells PCSK1/PC1 liberates GLP-1 and GLP-2. GLP-1 is further N-terminally truncated by post-translational processing in the intestinal L cells resulting in GLP-1(7-37) GLP-1-(7-36)amide.

The protein resides in the secreted. Functionally, plays a key role in glucose metabolism and homeostasis. Regulates blood glucose by increasing gluconeogenesis and decreasing glycolysis. Potent stimulator of glucose-dependent insulin release. Plays important roles on gastric motility and the suppression of plasma glucagon levels. May be involved in the suppression of satiety and stimulation of glucose disposal in peripheral tissues, independent of the actions of insulin. Has growth-promoting activities on intestinal epithelium. May also regulate the hypothalamic pituitary axis (HPA) via effects on LH, TSH, CRH, oxytocin, and vasopressin secretion. Increases islet mass through stimulation of islet neogenesis and pancreatic beta cell proliferation. Its function is as follows. Stimulates intestinal growth and up-regulates villus height in the small intestine, concomitant with increased crypt cell proliferation and decreased enterocyte apoptosis. The gastrointestinal tract, from the stomach to the colon is the principal target for GLP-2 action. Plays a key role in nutrient homeostasis, enhancing nutrient assimilation through enhanced gastrointestinal function, as well as increasing nutrient disposal. Stimulates intestinal glucose transport and decreases mucosal permeability. The polypeptide is Pro-glucagon (GCG) (Gallus gallus (Chicken)).